A 181-amino-acid polypeptide reads, in one-letter code: MSSLSVFHVSSPDTPNKVLTHLEDIASTLGEHGVAFDRWEAAAPITPGASQEEVISAYRTQIDKLMTEHGYVTVDVISLNSDHPQKAELRAKFLEEHRHGEDEVRFFVAGRGLFTLHIDDYVYAVMCEKNDLISVPAGTRHWFDMGENPHFVAIRLFNNPEGWVANFTGEDIAGRFPRLED.

Positions 97, 99, 103, and 141 each coordinate Fe(2+). H97, H99, E103, and H141 together coordinate Ni(2+).

The protein belongs to the acireductone dioxygenase (ARD) family. Monomer. The cofactor is Fe(2+). Ni(2+) serves as cofactor.

The catalysed reaction is 1,2-dihydroxy-5-(methylsulfanyl)pent-1-en-3-one + O2 = 3-(methylsulfanyl)propanoate + CO + formate + 2 H(+). It carries out the reaction 1,2-dihydroxy-5-(methylsulfanyl)pent-1-en-3-one + O2 = 4-methylsulfanyl-2-oxobutanoate + formate + 2 H(+). It participates in amino-acid biosynthesis; L-methionine biosynthesis via salvage pathway; L-methionine from S-methyl-5-thio-alpha-D-ribose 1-phosphate: step 5/6. Its function is as follows. Catalyzes 2 different reactions between oxygen and the acireductone 1,2-dihydroxy-3-keto-5-methylthiopentene (DHK-MTPene) depending upon the metal bound in the active site. Fe-containing acireductone dioxygenase (Fe-ARD) produces formate and 2-keto-4-methylthiobutyrate (KMTB), the alpha-ketoacid precursor of methionine in the methionine recycle pathway. Ni-containing acireductone dioxygenase (Ni-ARD) produces methylthiopropionate, carbon monoxide and formate, and does not lie on the methionine recycle pathway. This is Acireductone dioxygenase from Pseudomonas savastanoi pv. phaseolicola (strain 1448A / Race 6) (Pseudomonas syringae pv. phaseolicola (strain 1448A / Race 6)).